A 724-amino-acid polypeptide reads, in one-letter code: Probable dipeptidyl-peptidase 5 (724 aa).

The first 19 residues, 1–19 (MGALTWLSVVAAAASTALA), serve as a signal peptide directing secretion. N-linked (GlcNAc...) asparagine glycans are attached at residues asparagine 76, asparagine 97, asparagine 154, asparagine 257, asparagine 383, and asparagine 453. The Charge relay system role is filled by serine 563. Asparagine 610 carries an N-linked (GlcNAc...) asparagine glycan. Active-site charge relay system residues include aspartate 646 and histidine 678.

It belongs to the peptidase S9C family.

It localises to the secreted. In terms of biological role, extracellular dipeptidyl-peptidase which removes N-terminal dipeptides sequentially from polypeptides having unsubstituted N-termini. The protein is Probable dipeptidyl-peptidase 5 (dpp5) of Aspergillus clavatus (strain ATCC 1007 / CBS 513.65 / DSM 816 / NCTC 3887 / NRRL 1 / QM 1276 / 107).